We begin with the raw amino-acid sequence, 412 residues long: Putative competence-damage inducible protein (412 aa).

Belongs to the CinA family.

This Bacillus anthracis protein is Putative competence-damage inducible protein.